We begin with the raw amino-acid sequence, 261 residues long: 7beta-hydroxysteroid dehydrogenase (261 aa).

Residues 17-21, 40-41, and 66-67 contribute to the NADP(+) site; these read TEGIG, RR, and DL. Tyrosine 156 (proton acceptor) is an active-site residue.

It belongs to the short-chain dehydrogenases/reductases (SDR) family. Homodimer.

The catalysed reaction is a 7beta-hydroxysteroid + NADP(+) = a 7-oxosteroid + NADPH + H(+). The enzyme catalyses ursocholate + NADP(+) = 3alpha,12alpha-dihydroxy-7-oxo-5beta-cholanate + NADPH + H(+). It catalyses the reaction 7-oxolithocholate + NADPH + H(+) = ursodeoxycholate + NADP(+). It carries out the reaction 3alpha,7beta-dihydroxy-12-oxo-5beta-cholan-24-oate + NADP(+) = 7,12-dioxo-lithocholate + NADPH + H(+). The catalysed reaction is 7beta-hydroxy-3,12-dioxo-5beta-cholan-24-oate + NADP(+) = dehydrocholate + NADPH + H(+). Its function is as follows. 7beta-hydroxysteroid dehydrogenase that catalyzes the reduction of the 7-oxo group of 7-oxosteroids, such as 3alpha,12alpha-dihydroxy-7-oxo-5beta-cholanate, 7-oxolithocholate, 7,12-dioxo-lithocholate and dehydrocholate, to the corresponding 7beta-hydroxysteroids. Is also able to catalyze the reverse oxidation reactions. Together with 7alpha-HSDH encoded in the adjacent gene, is likely involved in the epimerization of the hydroxy group at C-7 of primary bile acids through 7-keto bile acid intermediates. The protein is 7beta-hydroxysteroid dehydrogenase of Clostridium sardiniense (Clostridium absonum).